We begin with the raw amino-acid sequence, 620 residues long: MALLQIAEPGQSAAPHQHRLAVGIDLGTTNSLVAAVRSGETATLPDELGQHSLPSIVRYTQDSVEVGALAALSSAQDPQNTIVSVKRFMGRSLADIKAGEQSFPYEFAESENGLPLFVTPQGQVNPVQVSAEILRPLIARAEKTLGGELQGVVITVPAYFDDAQRQGTKDAAALLGVKVLRLLNEPTAAAIAYGLDSKQEGVIAIYDLGGGTFDISILRLNRGVFEVLATGGDSALGGDDFDHLLQAHMQQVWQLSDIDSQLSRQLLIESRRVKEALTDAAETEAKVILADGTELTQIVTKAEFDAMIAALVKKTIASCRRTLRDAGVTTDEVLETVMVGGSTRVPLVREQVEAFFGKPPLTSIDPDRVVAIGAAIQADILVGNKPESDLLLLDVIPLSLGIETMGGLVEKVVSRNTTIPVARAQEFTTFKDGQTAMAFHVVQGERELVADCRSLARFTLKGIPPLAAGAAHIRVTFQVDADGLLSVTAMEKSTGVQSSIQVKPSFGLSDTEIATMLKDSMKYAKDDIGRRMLAEQQVEAARVLESLHAALAKDGDLLNADERGQIDAIMANVAQVAAGDDADAIKLAIEKLDEQTQDFAARRMDNSIRVAFKGQSIDNI.

The protein belongs to the heat shock protein 70 family.

Functionally, chaperone involved in the maturation of iron-sulfur cluster-containing proteins. Has a low intrinsic ATPase activity which is markedly stimulated by HscB. In Shewanella baltica (strain OS195), this protein is Chaperone protein HscA homolog.